We begin with the raw amino-acid sequence, 1021 residues long: Collagenase ColH (1021 aa).

The first 30 residues, 1-30, serve as a signal peptide directing secretion; it reads MKRKCLSKRLMLAITMATIFTVNSTLPIYA. The propeptide occupies 31–40; that stretch reads AVDKNNATAA. The interval 41–320 is activator domain; that stretch reads VQNESKRYTV…SADQIKRHYD (280 aa). The segment at 41–717 is S1 metalloprotease domain; the sequence is VQNESKRYTV…TYDVVFHGYL (677 aa). The catalytic subdomain stretch occupies residues 330–601; sequence PLDKFKKEGK…MQERIDNYEN (272 aa). Asp-421 contributes to the Zn(2+) binding site. Residue Glu-430 participates in Ca(2+) binding. His-455 serves as a coordination point for Zn(2+). Residue Glu-456 is part of the active site. His-459 contacts Zn(2+). Ca(2+)-binding residues include Gly-463, Val-467, and Gly-469. Position 487 (Glu-487) interacts with Zn(2+). Positions 609-721 are helper subdomain; sequence DDYLVRHAYK…VFHGYLPNEG (113 aa). Positions 718-810 are S2a domain; it reads PNEGDSKNSL…VSTTTAEIKD (93 aa). 18 residues coordinate Ca(2+): Asn-725, Ser-726, Asp-753, Asp-755, Asp-794, Asn-814, Lys-815, Asp-842, Asp-844, Asp-884, Glu-908, Glu-910, Asn-912, Asn-913, Thr-931, Asp-937, Gln-938, and Asp-939. Positions 727–808 constitute a PKD 1 domain; the sequence is LPYGKINGTY…SSVSTTTAEI (82 aa). Residues 811 to 904 form an S2b domain region; the sequence is LSENKLPVIY…KIKITDPVYP (94 aa). Positions 816–905 constitute a PKD 2 domain; sequence LPVIYMHVPK…IKITDPVYPI (90 aa). Residues 903 to 922 are disordered; that stretch reads YPIGTEKEPNNSKETASGPI. The tract at residues 905 to 1021 is S3 collagen-binding domain; sequence IGTEKEPNNS…RINIEGSVGR (117 aa). The collagen-binding stretch occupies residues 1002–1004; the sequence is YMF.

Belongs to the peptidase M9B family. Collagenase subfamily. The cofactor is Ca(2+). It depends on Zn(2+) as a cofactor. Post-translationally, upon purification gives rise to 98 kDa, 105 kDa and 116 kDa (full-length) proteins, all of which have the same N-terminus.

Its subcellular location is the secreted. It catalyses the reaction Digestion of native collagen in the triple helical region at Xaa-|-Gly bonds. With synthetic peptides, a preference is shown for Gly at P3 and P1', Pro and Ala at P2 and P2', and hydroxyproline, Ala or Arg at P3'.. With respect to regulation, inhibited by EDTA. Inhibited by 1-10-phenanthroline. Inhibited by broad-spectrum zinc metalloprotease inhibitor batimastat. N-aryl mercaptoacetamide-based inhibitors have been isolated that act on clostridial collagenases with submicromolar affinity while having negligibile activity on human collagenases. Clostridial collagenases are among the most efficient degraders of eukaryotic collagen known; saprophytes use collagen as a carbon source while pathogens additionally digest collagen to aid in host colonization. Has both tripeptidylcarboxypeptidase on Gly-X-Y and endopeptidase activities; the endopeptidase cuts within the triple helix region of collagen while tripeptidylcarboxypeptidase successively digests the exposed ends, thus clostridial collagenases can digest large sections of collagen. The full-length protein has collagenase activity, while both the 116 kDa and 98 kDa forms act on gelatin. In vitro digestion of soluble calf skin collagen fibrils requires both ColG and ColH; ColG forms missing the second collagen-binding domain is also synergistic with ColH, although their overall efficiency is decreased. Digestion of collagen requires Ca(2+) and is inhibited by EDTA. The activator domain (residues 119-388) and catalytic subdomain (330-601) open and close around substrate allowing digestion when the protein is closed. The protein is Collagenase ColH of Hathewaya histolytica (Clostridium histolyticum).